A 427-amino-acid chain; its full sequence is Alpha/beta hydrolase gkaG (427 aa).

D368 is a catalytic residue.

It belongs to the AB hydrolase superfamily. Homodimer.

It functions in the pathway mycotoxin biosynthesis. Its function is as follows. Alpha/beta hydrolase; part of the gene cluster that mediates the biosynthesis of GKK1032, fungal natural products containing a macrocyclic para-cyclophane connected to a decahydrofluorene ring system that show potent antitumor activities. Within the pathway, gkaG catalyzes the Knoevenagel condensation that affords the 3-pyrrolin-2-one ring, using as substrate the polyketide-tyrosyl acyl thioester product of gkaA. The pathway begins with the PKS-NRPS gkaA which, with the help of the trans-enoyl reductase gkaC, synthesizes the polyketide-tyrosyl acyl thioester product which can be reductively off-loaded by the terminal reductase (R) domain in gkaA. The alpha/beta hydrolase gkaG is then required to catalyze the subsequent Knoevenagel condensation that affords the 3-pyrrolin-2-one ring, whereas the three proteins gkaB, gkaX and gkaZ then function synergistically to form the cyclophane. The sequence is that of Alpha/beta hydrolase gkaG from Penicillium citrinum.